The sequence spans 300 residues: Phospholipase A1 (300 aa).

A disulfide bond links Cys-4 and Cys-87. The active-site Nucleophile is Ser-137. Residue Asp-165 is the Charge relay system of the active site. Intrachain disulfides connect Cys-176–Cys-181 and Cys-219–Cys-227. His-229 acts as the Charge relay system in catalysis. 3 disulfide bridges follow: Cys-244/Cys-268, Cys-245/Cys-293, and Cys-261/Cys-266.

This sequence belongs to the AB hydrolase superfamily. Lipase family. In terms of tissue distribution, expressed by the venom gland.

Its subcellular location is the secreted. The catalysed reaction is a 1,2-diacyl-sn-glycero-3-phosphocholine + H2O = a 2-acyl-sn-glycero-3-phosphocholine + a fatty acid + H(+). In terms of biological role, catalyzes the hydrolysis of phosphatidylcholine with phospholipase A1 activity. May act as an allergen and induce hemolytic activity. This Vespula maculifrons (Eastern yellow jacket) protein is Phospholipase A1.